The chain runs to 222 residues: Pyridoxine/pyridoxamine 5'-phosphate oxidase (222 aa).

Substrate-binding positions include 14–17 (RRNY) and K71. FMN is bound by residues 66-71 (RTVLLK), 81-82 (FT), R87, K88, and Q110. Positions 128, 132, and 136 each coordinate substrate. Residues 145-146 (QS) and W190 each bind FMN. 196-198 (RLN) contacts substrate. Position 200 (R200) interacts with FMN.

This sequence belongs to the pyridoxamine 5'-phosphate oxidase family. In terms of assembly, homodimer. It depends on FMN as a cofactor.

The catalysed reaction is pyridoxamine 5'-phosphate + O2 + H2O = pyridoxal 5'-phosphate + H2O2 + NH4(+). The enzyme catalyses pyridoxine 5'-phosphate + O2 = pyridoxal 5'-phosphate + H2O2. It functions in the pathway cofactor metabolism; pyridoxal 5'-phosphate salvage; pyridoxal 5'-phosphate from pyridoxamine 5'-phosphate: step 1/1. The protein operates within cofactor metabolism; pyridoxal 5'-phosphate salvage; pyridoxal 5'-phosphate from pyridoxine 5'-phosphate: step 1/1. Catalyzes the oxidation of either pyridoxine 5'-phosphate (PNP) or pyridoxamine 5'-phosphate (PMP) into pyridoxal 5'-phosphate (PLP). This chain is Pyridoxine/pyridoxamine 5'-phosphate oxidase, found in Prochlorococcus marinus (strain MIT 9303).